The sequence spans 48 residues: Cuticle protein 5.1 (48 aa).

In terms of biological role, component of the cuticle of migratory locust which contains more than 100 different structural proteins. This is Cuticle protein 5.1 from Locusta migratoria (Migratory locust).